We begin with the raw amino-acid sequence, 111 residues long: MSSKIIKENKRLVLDLYKRCLYSAKRCPKYQNQMMMESYIKLKFRSNKEIHQKDFETIENLLKQGEEELKSMNDFHELRAKSKSGQDHESILNDCFDDDFNYIGSTPTVKK.

It belongs to the complex I LYR family. SDHAF1 subfamily. In terms of assembly, interacts with the iron-sulfur protein subunit within the SDH catalytic dimer.

The protein localises to the mitochondrion matrix. In terms of biological role, plays an essential role in the assembly of succinate dehydrogenase (SDH), an enzyme complex (also referred to as respiratory complex II) that is a component of both the tricarboxylic acid (TCA) cycle and the mitochondrial electron transport chain, and which couples the oxidation of succinate to fumarate with the reduction of ubiquinone (coenzyme Q) to ubiquinol. Promotes maturation of the iron-sulfur protein subunit of the SDH catalytic dimer, protecting it from the deleterious effects of oxidants. May act together with SDHAF3. This is Succinate dehydrogenase assembly factor 1B, mitochondrial from Dictyostelium discoideum (Social amoeba).